Here is a 472-residue protein sequence, read N- to C-terminus: Chromosomal replication initiator protein DnaA (472 aa).

The interval 1-73 is domain I, interacts with DnaA modulators; the sequence is MSNMEHDRWS…LTCWQAEMPE (73 aa). Residues 73-128 form a domain II region; that stretch reads EVCRIDLTVRSPMRAAVTKEAPAPAEHRRDEHRPAADARSHAAAPAPSNHDALGGS. A disordered region spans residues 89–127; the sequence is VTKEAPAPAEHRRDEHRPAADARSHAAAPAPSNHDALGG. The segment covering 97–112 has biased composition (basic and acidic residues); it reads AEHRRDEHRPAADARS. Residues 113 to 124 are compositionally biased toward low complexity; that stretch reads HAAAPAPSNHDA. Residues 129-351 form a domain III, AAA+ region region; sequence PLDPRLTFAS…GAINRLLAHS (223 aa). G176, G178, K179, and T180 together coordinate ATP. Positions 352–472 are domain IV, binds dsDNA; the sequence is KLNAQPVTLE…VESLKRQLQE (121 aa).

This sequence belongs to the DnaA family. Oligomerizes as a right-handed, spiral filament on DNA at oriC.

Its subcellular location is the cytoplasm. Plays an essential role in the initiation and regulation of chromosomal replication. ATP-DnaA binds to the origin of replication (oriC) to initiate formation of the DNA replication initiation complex once per cell cycle. Binds the DnaA box (a 9 base pair repeat at the origin) and separates the double-stranded (ds)DNA. Forms a right-handed helical filament on oriC DNA; dsDNA binds to the exterior of the filament while single-stranded (ss)DNA is stabiized in the filament's interior. The ATP-DnaA-oriC complex binds and stabilizes one strand of the AT-rich DNA unwinding element (DUE), permitting loading of DNA polymerase. After initiation quickly degrades to an ADP-DnaA complex that is not apt for DNA replication. Binds acidic phospholipids. The protein is Chromosomal replication initiator protein DnaA of Rhodopseudomonas palustris (strain BisB5).